The sequence spans 343 residues: HTH-type transcriptional regulator GntR (343 aa).

The 55-residue stretch at 16-70 folds into the HTH lacI-type domain; it reads PTLNEVARRAGVSPITASRALRGVASVAEELAQKVRDAARELGYVANPAARALAS. The H-T-H motif DNA-binding region spans 18–37; the sequence is LNEVARRAGVSPITASRALR.

Its activity is regulated as follows. Free GntR fails to recognize gluconate and 6-phosphogluconate, whereas the GntR/DNA complexes recognize both ligands. It is therefore likely that GntR DNA binding induces structural changes that permit GntR to recognize effectors. In terms of biological role, involved in the regulation of glucose metabolism. Represses its own expression as well as that of the gluconate permease GntP. It employs an effector mediated de-repression mechanism: in the absence of ligand, GntR binds to the gntR and gntP promoters and represses their expression. The release of promoter bound GntR is induced by gluconate and 6-phosphogluconate that bind with similar apparent affinities to the GntR/DNA complex. The release of GntR leads to transcription of the genes. The chain is HTH-type transcriptional regulator GntR from Pseudomonas aeruginosa (strain ATCC 15692 / DSM 22644 / CIP 104116 / JCM 14847 / LMG 12228 / 1C / PRS 101 / PAO1).